The primary structure comprises 281 residues: Succinate dehydrogenase [ubiquinone] iron-sulfur subunit 1, mitochondrial (281 aa).

The N-terminal 25 residues, 1–25 (MAAAALLRRSPAARALLSPALSSRL), are a transit peptide targeting the mitochondrion. The interval 26–48 (VASKPHSSSPAPPPPPSKAGANT) is disordered. The region spanning 49 to 141 (KTFSIYRWDP…ASTISPLPHM (93 aa)) is the 2Fe-2S ferredoxin-type domain. Residues cysteine 102, cysteine 107, and cysteine 122 each contribute to the [2Fe-2S] cluster site. The 4Fe-4S ferredoxin-type domain maps to 184–214 (DRAKLDGMYECILCACCSTSCPSYWWNPEEY). Positions 194, 197, and 200 each coordinate [4Fe-4S] cluster. Cysteine 204 is a [3Fe-4S] cluster binding site. Tryptophan 209 contacts a ubiquinone. Cysteine 251 and cysteine 257 together coordinate [3Fe-4S] cluster. Position 261 (cysteine 261) interacts with [4Fe-4S] cluster.

This sequence belongs to the succinate dehydrogenase/fumarate reductase iron-sulfur protein family. In terms of assembly, component of complex II composed of eight subunits in plants: four classical SDH subunits SDH1, SDH2, SDH3 and SDH4 (a flavoprotein (FP), an iron-sulfur protein (IP), and a cytochrome b composed of a large and a small subunit.), as well as four subunits unknown in mitochondria from bacteria and heterotrophic eukaryotes. [2Fe-2S] cluster is required as a cofactor. The cofactor is [3Fe-4S] cluster. [4Fe-4S] cluster serves as cofactor.

It localises to the mitochondrion inner membrane. The enzyme catalyses a quinone + succinate = fumarate + a quinol. The protein operates within carbohydrate metabolism; tricarboxylic acid cycle; fumarate from succinate (eukaryal route): step 1/1. Its function is as follows. Iron-sulfur protein (IP) subunit of succinate dehydrogenase (SDH) that is involved in complex II of the mitochondrial electron transport chain and is responsible for transferring electrons from succinate to ubiquinone (coenzyme Q). The protein is Succinate dehydrogenase [ubiquinone] iron-sulfur subunit 1, mitochondrial of Oryza sativa subsp. japonica (Rice).